Reading from the N-terminus, the 143-residue chain is uncharacterized protein (143 aa).

Positions 111 to 143 are disordered; it reads VTQDISHTSGKSPTPKAKSSSPKKSKKKNWIPL. Residues 119–130 are compositionally biased toward low complexity; the sequence is SGKSPTPKAKSS. The segment covering 131–143 has biased composition (basic residues); that stretch reads SPKKSKKKNWIPL.

This sequence belongs to the chlamydial CPn_0742/CT_635/TC_0003 family.

This is an uncharacterized protein from Chlamydia muridarum (strain MoPn / Nigg).